A 167-amino-acid chain; its full sequence is UPF0587 protein F46B6.12 (167 aa).

4 residues coordinate Zn(2+): Cys34, Cys37, Cys68, and Cys71.

The protein belongs to the UPF0587 family.

The polypeptide is UPF0587 protein F46B6.12 (Caenorhabditis elegans).